The chain runs to 60 residues: Cytochrome c oxidase subunit 9, mitochondrial (60 aa).

The Mitochondrial matrix portion of the chain corresponds to 1–18 (MSAIAPITGSLKKRIMKD). The helical transmembrane segment at 19 to 37 (IAVGMGLGTVLGSYWWWGF) threads the bilayer. The Mitochondrial intermembrane portion of the chain corresponds to 38-57 (HKPKIAARENYYTQLAEQKA). Positions 58 to 60 (AEE) are cleaved as a propeptide — removed in mature form.

It belongs to the fungal cytochrome c oxidase subunit 7a family. As to quaternary structure, component of the cytochrome c oxidase (complex IV, CIV), a multisubunit enzyme composed of a catalytic core of 3 subunits and several supernumerary subunits. The complex exists as a monomer or a dimer and forms supercomplexes (SCs) in the inner mitochondrial membrane with ubiquinol-cytochrome c oxidoreductase (cytochrome b-c1 complex, complex III, CIII).

Its subcellular location is the mitochondrion inner membrane. The protein operates within energy metabolism; oxidative phosphorylation. Component of the cytochrome c oxidase, the last enzyme in the mitochondrial electron transport chain which drives oxidative phosphorylation. The respiratory chain contains 3 multisubunit complexes succinate dehydrogenase (complex II, CII), ubiquinol-cytochrome c oxidoreductase (cytochrome b-c1 complex, complex III, CIII) and cytochrome c oxidase (complex IV, CIV), that cooperate to transfer electrons derived from NADH and succinate to molecular oxygen, creating an electrochemical gradient over the inner membrane that drives transmembrane transport and the ATP synthase. Cytochrome c oxidase is the component of the respiratory chain that catalyzes the reduction of oxygen to water. Electrons originating from reduced cytochrome c in the intermembrane space (IMS) are transferred via the dinuclear copper A center (CU(A)) of subunit 2 and heme A of subunit 1 to the active site in subunit 1, a binuclear center (BNC) formed by heme A3 and copper B (CU(B)). The BNC reduces molecular oxygen to 2 water molecules using 4 electrons from cytochrome c in the IMS and 4 protons from the mitochondrial matrix. The chain is Cytochrome c oxidase subunit 9, mitochondrial (COX9) from Eremothecium gossypii (strain ATCC 10895 / CBS 109.51 / FGSC 9923 / NRRL Y-1056) (Yeast).